Reading from the N-terminus, the 775-residue chain is Transcription activator of gluconeogenesis HCBG_00867 (775 aa).

Positions 1–70 (MTASTQNGSP…NAKDPLRPRR (70 aa)) are disordered. 2 stretches are compositionally biased toward polar residues: residues 21–41 (NQESKNMTANPADASESQSPA) and 48–60 (TAESGQKHTSTAA). Residues 77 to 105 (CFACQRAHLTCGDERPCQRCIKRGLQDAC) constitute a DNA-binding region (zn(2)-C6 fungal-type). Disordered stretches follow at residues 179-248 (TQAK…PFGA), 286-351 (GAGD…NIYN), 556-592 (NLNVNTGGSSPRGSGTFTPRNGNGVDPHSGMSAAGGG), and 649-725 (QGKE…SPKQ). A compositionally biased stretch (polar residues) spans 195 to 217 (MQDTSINPSAFQAPSPTSTPNFD). The segment covering 218–229 (LSSNPPNRNLSS) has biased composition (low complexity). 4 stretches are compositionally biased toward polar residues: residues 230–244 (AMTQTPSSASNQTQD), 292–323 (PSDSATQRGSIGRSSGTFTAQNFGDSTNTQSP), 334–351 (WNPSGQSQTNPRNNNIYN), and 557–576 (LNVNTGGSSPRGSGTFTPRN). Residues 657 to 668 (GSDGKGGGGGGD) are compositionally biased toward gly residues. Over residues 669–713 (VAATAATTSTSTSNGANSSGHANANRNNTNPKNSSPPSSSSAAAA) the composition is skewed to low complexity.

Belongs to the ERT1/acuK family.

It localises to the nucleus. Functionally, transcription factor which regulates nonfermentable carbon utilization. Activator of gluconeogenetic genes. This chain is Transcription activator of gluconeogenesis HCBG_00867, found in Ajellomyces capsulatus (strain G186AR / H82 / ATCC MYA-2454 / RMSCC 2432) (Darling's disease fungus).